The primary structure comprises 382 residues: Protein MSN1 (382 aa).

The interval 12–26 (LNENEAILTNRVAEL) is leucine-zipper. 2 stretches are compositionally biased toward polar residues: residues 104–114 (TLDPQGFTDGT) and 122–138 (NYTS…HPQN). Disordered regions lie at residues 104 to 138 (TLDP…HPQN) and 155 to 260 (NSQE…EEEQ). Positions 162–180 (SQQQTNSSNSISQENNSTN) are enriched in low complexity. 2 stretches are compositionally biased toward polar residues: residues 181–198 (PSVD…SNLV) and 207–221 (NPPN…GLYI). Residues 222–231 (SSNSSQSRQS) show a composition bias toward low complexity. The segment covering 232–253 (PNLQKVSPNHENAVESNAQESV) has biased composition (polar residues). Positions 266 to 271 (GLKRKR) match the Nuclear localization signal motif.

It localises to the nucleus. In terms of biological role, may function as a transcriptional activator. Increased dosage of MSN1 restores invertase expression in yeast mutants defective in the SNF1 protein kinase, and msn1 disruption reduced derepression of invertase in the wild-type. May affect SUC2 expression. Expression of MSN1 enhances growth in iron-limiting conditions. This chain is Protein MSN1 (MSN1), found in Saccharomyces cerevisiae (strain ATCC 204508 / S288c) (Baker's yeast).